A 182-amino-acid chain; its full sequence is Crossover junction endodeoxyribonuclease RuvC (182 aa).

Residues Asp-7, Glu-67, and Asp-139 contribute to the active site. Mg(2+)-binding residues include Asp-7, Glu-67, and Asp-139.

The protein belongs to the RuvC family. Homodimer which binds Holliday junction (HJ) DNA. The HJ becomes 2-fold symmetrical on binding to RuvC with unstacked arms; it has a different conformation from HJ DNA in complex with RuvA. In the full resolvosome a probable DNA-RuvA(4)-RuvB(12)-RuvC(2) complex forms which resolves the HJ. Mg(2+) is required as a cofactor.

It localises to the cytoplasm. It carries out the reaction Endonucleolytic cleavage at a junction such as a reciprocal single-stranded crossover between two homologous DNA duplexes (Holliday junction).. In terms of biological role, the RuvA-RuvB-RuvC complex processes Holliday junction (HJ) DNA during genetic recombination and DNA repair. Endonuclease that resolves HJ intermediates. Cleaves cruciform DNA by making single-stranded nicks across the HJ at symmetrical positions within the homologous arms, yielding a 5'-phosphate and a 3'-hydroxyl group; requires a central core of homology in the junction. The consensus cleavage sequence is 5'-(A/T)TT(C/G)-3'. Cleavage occurs on the 3'-side of the TT dinucleotide at the point of strand exchange. HJ branch migration catalyzed by RuvA-RuvB allows RuvC to scan DNA until it finds its consensus sequence, where it cleaves and resolves the cruciform DNA. This Bordetella pertussis (strain Tohama I / ATCC BAA-589 / NCTC 13251) protein is Crossover junction endodeoxyribonuclease RuvC.